A 330-amino-acid chain; its full sequence is Transcription factor TGA6 (330 aa).

Over residues 1–13 (MADTSSRTDVSTD) the composition is skewed to polar residues. The segment at 1–45 (MADTSSRTDVSTDGDTDHRDLGSDRGHMHAAASDSSDRSKDKLDQ) is disordered. Composition is skewed to basic and acidic residues over residues 15–27 (DTDHRDLGSDRGH) and 35–45 (SSDRSKDKLDQ). The region spanning 44-107 (DQKTLRRLAQ…SSGDQAHSTG (64 aa)) is the bZIP domain. Coiled coils occupy residues 45 to 142 (QKTL…HAGD) and 217 to 233 (INSLQQTSQQAEDALSQ). A basic motif region spans residues 46 to 66 (KTLRRLAQNREAARKSRLRKK). The tract at residues 72–86 (LENSRLKLTQLEQEL) is leucine-zipper. A DOG1 domain is found at 111-327 (ALAFDAEHSR…RALSSLWLAR (217 aa)).

The protein belongs to the bZIP family. As to quaternary structure, binds DNA as a dimer. Interacts with NPR1, NPR3 and NPR4. Interacts with GRXC9/GRX480. Expressed predominantly in roots and flowers.

It is found in the nucleus. In terms of biological role, transcriptional activator that binds specifically to the DNA sequence 5'-TGACG-3'. Recognizes ocs elements like the as-1 motif of the cauliflower mosaic virus 35S promoter. Binding to the as-1-like cis elements mediate auxin- and salicylic acid-inducible transcription. May be involved in the induction of the systemic acquired resistance (SAR) via its interaction with NPR1. Could also bind to the Hex-motif (5'-TGACGTGG-3') another cis-acting element found in plant histone promoters. This Arabidopsis thaliana (Mouse-ear cress) protein is Transcription factor TGA6 (TGA6).